A 265-amino-acid chain; its full sequence is MAAAALKRMRGPAQAKLLPGSAIQALVGLARPLVLALLLVSAALSSVVSRTDSPSPTVLNSHISTPNVNALTHENQTKPSISQISTTLPPTMSTEKSGGASVAPHPSPTPLSQEEADNNEDPSIEEEDLLMLNSSPSTAKDTLDNGDYGEPDYDWTTGPRDDDESDDTLEENRGYVEIEQSVKSFKMPSSNIEEEDSHFFFHLIIFAFCIAVVYITYHNKRKIFLLVQSRKWRDGLCSKTVEYHRLDQNVNEAMPSLKITNDYTF.

The first 49 residues, 1–49 (MAAAALKRMRGPAQAKLLPGSAIQALVGLARPLVLALLLVSAALSSVVS), serve as a signal peptide directing secretion. The Extracellular portion of the chain corresponds to 50–196 (RTDSPSPTVL…MPSSNIEEED (147 aa)). Positions 72 to 96 (THENQTKPSISQISTTLPPTMSTEK) are enriched in polar residues. Disordered stretches follow at residues 72-123 (THEN…EDPS) and 135-168 (SPSTAKDTLDNGDYGEPDYDWTTGPRDDDESDDT). A glycan (N-linked (GlcNAc...) asparagine) is linked at Asn-75. The span at 114-123 (EEADNNEDPS) shows a compositional bias: acidic residues. The helical transmembrane segment at 197–217 (SHFFFHLIIFAFCIAVVYITY) threads the bilayer. The Cytoplasmic portion of the chain corresponds to 218–265 (HNKRKIFLLVQSRKWRDGLCSKTVEYHRLDQNVNEAMPSLKITNDYTF). Ser-229 and Ser-256 each carry phosphoserine.

It localises to the membrane. The protein is Keratinocyte-associated transmembrane protein 2 (KCT2) of Pongo abelii (Sumatran orangutan).